Consider the following 470-residue polypeptide: Chromosomal replication initiator protein DnaA (470 aa).

The interval Met-1–Ile-89 is domain I, interacts with DnaA modulators. A domain II region spans residues Ile-89–Pro-130. Positions His-131 to Ser-348 are domain III, AAA+ region. ATP is bound by residues Gly-176, Gly-178, Lys-179, and Thr-180. The interval Thr-349–Ala-470 is domain IV, binds dsDNA.

This sequence belongs to the DnaA family. As to quaternary structure, oligomerizes as a right-handed, spiral filament on DNA at oriC.

Its subcellular location is the cytoplasm. Its function is as follows. Plays an essential role in the initiation and regulation of chromosomal replication. ATP-DnaA binds to the origin of replication (oriC) to initiate formation of the DNA replication initiation complex once per cell cycle. Binds the DnaA box (a 9 base pair repeat at the origin) and separates the double-stranded (ds)DNA. Forms a right-handed helical filament on oriC DNA; dsDNA binds to the exterior of the filament while single-stranded (ss)DNA is stabiized in the filament's interior. The ATP-DnaA-oriC complex binds and stabilizes one strand of the AT-rich DNA unwinding element (DUE), permitting loading of DNA polymerase. After initiation quickly degrades to an ADP-DnaA complex that is not apt for DNA replication. Binds acidic phospholipids. The polypeptide is Chromosomal replication initiator protein DnaA (Bacteroides thetaiotaomicron (strain ATCC 29148 / DSM 2079 / JCM 5827 / CCUG 10774 / NCTC 10582 / VPI-5482 / E50)).